Reading from the N-terminus, the 311-residue chain is MALPIIIDCDPGHDDAIALVLALASPELEVKAITSSAGNQTPEKTLRNVLRMLTLLKRPDIPVAGGAVKPLMRELIIADNVHGESGLDGPALPEPSFAPQSGTAVELMAKTLRESAQPVTIVSTGPQTNVALLLNSHPELHTKIARIVIMGGAMALGNWTPAAEFNIYVDPEAAEIVFQSGIPVVMAGLDVTHKAQIHAADIERFRDIGNPISTIVAELLDFFFEYHKDEKWGFVGAPLHDPCTIAWLLKPEIFTTVERWVGVETQGKYTQGMTVVDYYFLTGNKPNATVMVDVDRQGFVDLLAERLQYYA.

Residue His-240 is part of the active site.

The protein belongs to the IUNH family. RihA subfamily.

Hydrolyzes cytidine or uridine to ribose and cytosine or uracil, respectively. This is Pyrimidine-specific ribonucleoside hydrolase RihA from Salmonella paratyphi B (strain ATCC BAA-1250 / SPB7).